Here is a 142-residue protein sequence, read N- to C-terminus: Large ribosomal subunit protein uL11 (142 aa).

It belongs to the universal ribosomal protein uL11 family. Part of the ribosomal stalk of the 50S ribosomal subunit. Interacts with L10 and the large rRNA to form the base of the stalk. L10 forms an elongated spine to which L12 dimers bind in a sequential fashion forming a multimeric L10(L12)X complex. Post-translationally, one or more lysine residues are methylated.

Functionally, forms part of the ribosomal stalk which helps the ribosome interact with GTP-bound translation factors. The protein is Large ribosomal subunit protein uL11 of Bartonella tribocorum (strain CIP 105476 / IBS 506).